The chain runs to 197 residues: Large ribosomal subunit protein eL15 (197 aa).

A disordered region spans residues 175 to 197 (LRTGRKGSSKSRPSIRANGRLRR).

This sequence belongs to the eukaryotic ribosomal protein eL15 family.

The sequence is that of Large ribosomal subunit protein eL15 (rpl15e) from Thermoplasma volcanium (strain ATCC 51530 / DSM 4299 / JCM 9571 / NBRC 15438 / GSS1).